The primary structure comprises 150 residues: uncharacterized protein (150 aa).

This is an uncharacterized protein from Escherichia coli O157:H7.